Consider the following 228-residue polypeptide: ATP synthase F(0) complex subunit a (228 aa).

5 consecutive transmembrane segments (helical) span residues 13-33 (NILA…IFPM), 69-89 (WALI…LGLL), 98-118 (QLSM…LIGL), 139-159 (IPTL…ALGV), and 194-214 (ILLF…ALVF).

It belongs to the ATPase A chain family. In terms of assembly, component of the ATP synthase complex composed at least of ATP5F1A/subunit alpha, ATP5F1B/subunit beta, ATP5MC1/subunit c (homooctomer), MT-ATP6/subunit a, MT-ATP8/subunit 8, ATP5ME/subunit e, ATP5MF/subunit f, ATP5MG/subunit g, ATP5MK/subunit k, ATP5MJ/subunit j, ATP5F1C/subunit gamma, ATP5F1D/subunit delta, ATP5F1E/subunit epsilon, ATP5PF/subunit F6, ATP5PB/subunit b, ATP5PD/subunit d, ATP5PO/subunit OSCP. ATP synthase complex consists of a soluble F(1) head domain (subunits alpha(3) and beta(3)) - the catalytic core - and a membrane F(0) domain - the membrane proton channel (subunits c, a, 8, e, f, g, k and j). These two domains are linked by a central stalk (subunits gamma, delta, and epsilon) rotating inside the F1 region and a stationary peripheral stalk (subunits F6, b, d, and OSCP). Interacts with DNAJC30; interaction is direct.

The protein resides in the mitochondrion inner membrane. The enzyme catalyses H(+)(in) = H(+)(out). Subunit a, of the mitochondrial membrane ATP synthase complex (F(1)F(0) ATP synthase or Complex V) that produces ATP from ADP in the presence of a proton gradient across the membrane which is generated by electron transport complexes of the respiratory chain. ATP synthase complex consist of a soluble F(1) head domain - the catalytic core - and a membrane F(1) domain - the membrane proton channel. These two domains are linked by a central stalk rotating inside the F(1) region and a stationary peripheral stalk. During catalysis, ATP synthesis in the catalytic domain of F(1) is coupled via a rotary mechanism of the central stalk subunits to proton translocation. With the subunit c (ATP5MC1), forms the proton-conducting channel in the F(0) domain, that contains two crucial half-channels (inlet and outlet) that facilitate proton movement from the mitochondrial intermembrane space (IMS) into the matrix. Protons are taken up via the inlet half-channel and released through the outlet half-channel, following a Grotthuss mechanism. This Pelomedusa subrufa (African side-necked turtle) protein is ATP synthase F(0) complex subunit a.